A 538-amino-acid chain; its full sequence is Potassium channel subfamily K member 10 (538 aa).

At Met1–Thr71 the chain is on the cytoplasmic side. A helical transmembrane segment spans residues Val72–Ala92. 3 N-linked (GlcNAc...) asparagine glycosylation sites follow: Asn144, Asn147, and Asn148. Residues Leu154–Gly180 constitute an intramembrane region (pore-forming). 4 residues coordinate K(+): Thr167, Ile168, Gly169, and Tyr170. Residues Thr167–Asn172 form a selectivity filter 1 region. The chain crosses the membrane as a helical span at residues Ile182 to Ile202. The Cytoplasmic portion of the chain corresponds to Gly203 to Val233. The chain crosses the membrane as a helical span at residues Ile234–Ile254. The pore-forming intramembrane region spans Ala263–Glu294. K(+) is bound by residues Thr276, Val277, Gly278, and Phe279. Residues Thr276–Asp281 are selectivity filter 2. A helical membrane pass occupies residues Leu299–Gly319. Over Asp320–Asn538 the chain is Cytoplasmic. Residues Ser412–Asn421 show a composition bias toward polar residues. Disordered stretches follow at residues Ser412–Ile443 and Gln510–Asn538. Positions Asp522 to Asn538 are enriched in basic and acidic residues.

Belongs to the two pore domain potassium channel (TC 1.A.1.8) family. As to quaternary structure, homodimer; disulfide-linked. Forms heterodimers with other 2-pore domain K(+) channel subunits, such as KCNK2, KCNK4 and KCNK18. In terms of tissue distribution, abundantly expressed in pancreas and kidney and to a lower level in brain, testis, colon, and small intestine. In brain, mainly expressed in cerebellum, occipital lobe, putamen, and thalamus. No expression is detected in amygdala and spinal cord. As to expression, strongly expressed in kidney (primarily in the proximal tubule) and pancreas. Abundantly expressed in brain.

It is found in the cell membrane. It carries out the reaction K(+)(in) = K(+)(out). The catalysed reaction is Rb(+)(in) = Rb(+)(out). The enzyme catalyses Cs(+)(in) = Cs(+)(out). Activated by various stimuli including acidic pH, anesthetics chloroform, halothane and isoflurane, mechanical stretch, lipids such as arachidonic, docosahexaenoic and linoleic polyunsaturated fatty acids and lysophosphatidylcholine and lysophosphatidylinositol lysophospholipids. Inhibited by norfluoxetine, the active metabolite of antidepressant fluoxetine (Prozac). Its function is as follows. K(+) channel that conducts voltage-dependent outward rectifying currents upon membrane depolarization. Voltage sensing is coupled to K(+) electrochemical gradient in an 'ion flux gating' mode where outward but not inward ion flow opens the gate. Converts to voltage-independent 'leak' conductance mode upon stimulation by various stimuli including mechanical membrane stretch, acidic pH, heat and lipids. Homo- and heterodimerizes to form functional channels with distinct regulatory and gating properties. In trigeminal ganglia sensory neurons, the heterodimer of KCNK10/TREK-2 and KCNK18/TRESK inhibits neuronal firing and neurogenic inflammation by stabilizing the resting membrane potential at K(+) equilibrium potential as well as by regulating the threshold of action potentials and the spike frequency. Permeable to other monovalent ions such as Rb(+) and Cs(+). This is Potassium channel subfamily K member 10 from Homo sapiens (Human).